A 384-amino-acid chain; its full sequence is V-type proton ATPase subunit C (384 aa).

It belongs to the V-ATPase C subunit family. In terms of assembly, V-ATPase is a heteromultimeric enzyme made up of two complexes: the ATP-hydrolytic V1 complex and the proton translocation V0 complex. The V1 complex consists of three catalytic AB heterodimers that form a heterohexamer, three peripheral stalks each consisting of EG heterodimers, one central rotor including subunits D and F, and the regulatory subunits C and H. The proton translocation complex V0 consists of the proton transport subunit a, a ring of proteolipid subunits c9c'', rotary subunit d, subunits e and f, and the accessory subunits vah-19/Ac45 and vah-20/PRR. Interacts with V-type proton ATPase subunits a1 unc-32, a2 vha-5 and a3 vha-6. In terms of tissue distribution, expressed ubiquitously; higher levels are found in gastrointestinal and hypodermal cells, as well as H-shaped excretory cell.

Its subcellular location is the cytoplasm. It is found in the membrane. Subunit of the V1 complex of vacuolar(H+)-ATPase (V-ATPase), a multisubunit enzyme composed of a peripheral complex (V1) that hydrolyzes ATP and a membrane integral complex (V0) that translocates protons. V-ATPase is responsible for acidifying and maintaining the pH of intracellular compartments and in some cell types, is targeted to the plasma membrane, where it is responsible for acidifying the extracellular environment. Subunit C is necessary for the assembly of the catalytic sector of the enzyme and is likely to have a specific function in its catalytic activity. Has roles in embryogenesis and ovulation. This chain is V-type proton ATPase subunit C, found in Caenorhabditis elegans.